We begin with the raw amino-acid sequence, 579 residues long: MESSAKRKMDPDNPDEGPSSKVPRPETPVTKATTFLQTMLRKEVNSQLSLGDPLFPELAEESLKTFERVTEDCNENPEKDVLAELGDILAQAVNHAGIDSSSTGPTLTTHSCSVSSAPLNKPTPTSVAVTNTPLPGASATPELSPRKKPRKTTRPFKVIIKPPVPPAPIMLPLIKQEDIKPEPDFTIQYRNKIIDTAGCIVISDSEEEQGEEVETRGATASSPSTGSGTPRVTSPTHPLSQMNHPPLPDPLGRPDEDSSSSSSSCSSASDSESESEEMKCSSGGGASVTSSHHGRGGFGGAASSSLLSCGHQSSGGASTGPRKKKSKRISELDNEKVRNIMKDKNTPFCTPNVQTRRGRVKIDEVSRMFRNTNRSLEYKNLPFTIPSMHQVLDEAIKACKTMQVNNKGIQIIYTRNHEVKSEVDAVRCRLGTMCNLALSTPFLMEHTMPVTHPPEVAQRTADACNEGVKAAWSLKELHTHQLCPRSSDYRNMIIHAATPVDLLGALNLCLPLMQKFPKQVMVRIFSTNQGGFMLPIYETAAKAYAVGQFEQPTETPPEDLDTLSLAIEAAIQDLRNKSQ.

The segment covering 1 to 11 has biased composition (basic and acidic residues); that stretch reads MESSAKRKMDP. 2 disordered regions span residues 1-30 and 99-161; these read MESS…TPVT and DSSS…VIIK. Polar residues predominate over residues 99–133; it reads DSSSTGPTLTTHSCSVSSAPLNKPTPTSVAVTNTP. Glycyl lysine isopeptide (Lys-Gly) (interchain with G-Cter in SUMO) cross-links involve residues lysine 175 and lysine 180. The short motif at 199 to 202 is the SUMO-interacting motif 1/SIM1 element; it reads CIVI. Residues 200–208 form a non-covalent SUMO1 binding region (SIM) region; the sequence is IVISDSEEE. 2 positions are modified to phosphoserine: serine 203 and serine 205. The interval 206-335 is disordered; it reads EEEQGEEVET…SKRISELDNE (130 aa). 3 stretches are compositionally biased toward low complexity: residues 216-236, 259-270, and 301-316; these read RGAT…TSPT, SSSSSSCSSASD, and AASS…SSGG. Positions 409–412 match the SUMO-interacting motif 1/SIM2 motif; the sequence is IQII. Positions 500 to 503 match the SUMO-interacting motif 1/SIM3 motif; sequence VDLL.

Belongs to the HHV-5 IE2 protein family. Interacts with host SUMO-modified form of TATA-binding protein (TBP)-associated factor 12/TAF12 in a SIM-dependent manner; this interaction increases the transactivation activity of IE2. Interacts with host CHAF1A. Interacts with several components of the host transcriptional machinery including TBP, TF2B and CREB1. Interacts with host DNA replication licensing factor MCM3. Interacts with host PLSCR1; this interaction inhibits IE2 transactivating activity. In terms of processing, phosphorylated by host CK2 at Ser-203 and Ser-205; leading to enhanced SUMOylation. SUMOylated; SUMOylation is enhanced when IE2 is phosphorylated by host CK2. The sumoylation is necessary for efficient replication of the virus and thus for the function of this viral transcription factor.

It localises to the host nucleus. Stimulates viral early and late gene expression and thus play a crucial role in the regulation of productive infection. Selectively drives host RNA Pol II transcription initiation at a subset of viral early-late and late promoters without substantially affecting Pol II transcription of expressed host genes. Mechanistically, forms a repressive complex at the major immediate-early promoter region involving direct association with host nucleosomes and TBP. Concerning activation, stimulates transcription by binding nearby, but not within, core promoter regions. In addition, activates quiescent cells to reenter the cell cycle and up-regulates several E2F-responsive genes, which are responsible for pushing the cell into S phase. In S-phase, inhibits cellular DNA synthesis and blocks further cell cycle progression. This Homo sapiens (Human) protein is Viral transcription factor IE2 (UL122).